The sequence spans 296 residues: Thiamine-monophosphate kinase (296 aa).

Mg(2+)-binding residues include aspartate 32, threonine 46, and aspartate 48. Aspartate 55 is a binding site for substrate. Mg(2+) is bound by residues aspartate 76 and aspartate 121. Residues 120 to 121 (GD) and arginine 144 each bind ATP. A Mg(2+)-binding site is contributed by aspartate 206. Serine 208 provides a ligand contact to ATP. Aspartate 209 lines the Mg(2+) pocket. Tyrosine 293 contributes to the substrate binding site.

The protein belongs to the thiamine-monophosphate kinase family.

The catalysed reaction is thiamine phosphate + ATP = thiamine diphosphate + ADP. It participates in cofactor biosynthesis; thiamine diphosphate biosynthesis; thiamine diphosphate from thiamine phosphate: step 1/1. Functionally, catalyzes the ATP-dependent phosphorylation of thiamine-monophosphate (TMP) to form thiamine-pyrophosphate (TPP), the active form of vitamin B1. The sequence is that of Thiamine-monophosphate kinase from Archaeoglobus fulgidus (strain ATCC 49558 / DSM 4304 / JCM 9628 / NBRC 100126 / VC-16).